A 159-amino-acid polypeptide reads, in one-letter code: Ribosomal RNA large subunit methyltransferase H (159 aa).

S-adenosyl-L-methionine-binding positions include G108 and 127–132 (FGKLTM).

This sequence belongs to the RNA methyltransferase RlmH family. Homodimer.

It is found in the cytoplasm. The enzyme catalyses pseudouridine(1915) in 23S rRNA + S-adenosyl-L-methionine = N(3)-methylpseudouridine(1915) in 23S rRNA + S-adenosyl-L-homocysteine + H(+). In terms of biological role, specifically methylates the pseudouridine at position 1915 (m3Psi1915) in 23S rRNA. This Lactobacillus acidophilus (strain ATCC 700396 / NCK56 / N2 / NCFM) protein is Ribosomal RNA large subunit methyltransferase H.